A 109-amino-acid polypeptide reads, in one-letter code: MVQLRRTITTNKVFQAITSTNDKVAHFVVFMWESWLFVKMFAEDIVTFRKLQANKYVLGVLICSLCASVTSEFAQSVVSRGQRVFDVKDIICNFWGSLLGVGIAFYQDR.

The chain crosses the membrane as a helical span at residues 90-107 (IICNFWGSLLGVGIAFYQ).

The protein localises to the membrane. This is an uncharacterized protein from Saccharomyces cerevisiae (strain ATCC 204508 / S288c) (Baker's yeast).